Here is a 144-residue protein sequence, read N- to C-terminus: Large ribosomal subunit protein uL15 (144 aa).

The tract at residues 24-52 is disordered; the sequence is GSGLGKTAGRGHKGLKSRSGGSVRPGFEG.

It belongs to the universal ribosomal protein uL15 family. Part of the 50S ribosomal subunit.

Binds to the 23S rRNA. In Cellvibrio japonicus (strain Ueda107) (Pseudomonas fluorescens subsp. cellulosa), this protein is Large ribosomal subunit protein uL15.